A 304-amino-acid polypeptide reads, in one-letter code: Acetylglutamate kinase (304 aa).

Substrate contacts are provided by residues 75–76, R97, and N202; that span reads GG.

The protein belongs to the acetylglutamate kinase family. ArgB subfamily.

The protein localises to the cytoplasm. The catalysed reaction is N-acetyl-L-glutamate + ATP = N-acetyl-L-glutamyl 5-phosphate + ADP. It functions in the pathway amino-acid biosynthesis; L-arginine biosynthesis; N(2)-acetyl-L-ornithine from L-glutamate: step 2/4. Its function is as follows. Catalyzes the ATP-dependent phosphorylation of N-acetyl-L-glutamate. This Parvibaculum lavamentivorans (strain DS-1 / DSM 13023 / NCIMB 13966) protein is Acetylglutamate kinase.